A 354-amino-acid polypeptide reads, in one-letter code: F-box/kelch-repeat protein At1g80440 (354 aa).

In terms of domain architecture, F-box spans 2–49 (ELIPNLPDDVARECLLRSSYQQFPVIASVCRAWNREVSLSQFLHQRKA). Kelch repeat units lie at residues 63–110 (RVDP…CRLV), 115–163 (DLIV…ASDS), 166–213 (TVLV…FHAG), and 215–263 (FHVI…PPTC).

The chain is F-box/kelch-repeat protein At1g80440 from Arabidopsis thaliana (Mouse-ear cress).